The primary structure comprises 204 residues: tRNA (guanine-N(7)-)-methyltransferase (204 aa).

S-adenosyl-L-methionine-binding residues include Glu-36, Glu-61, and Asp-111. Asp-111 is an active-site residue. Residues Lys-115, Asp-147, and 177-180 (TRFE) each bind substrate.

The protein belongs to the class I-like SAM-binding methyltransferase superfamily. TrmB family.

The catalysed reaction is guanosine(46) in tRNA + S-adenosyl-L-methionine = N(7)-methylguanosine(46) in tRNA + S-adenosyl-L-homocysteine. It functions in the pathway tRNA modification; N(7)-methylguanine-tRNA biosynthesis. In terms of biological role, catalyzes the formation of N(7)-methylguanine at position 46 (m7G46) in tRNA. This chain is tRNA (guanine-N(7)-)-methyltransferase, found in Chlorobium phaeobacteroides (strain DSM 266 / SMG 266 / 2430).